A 217-amino-acid polypeptide reads, in one-letter code: Uridylate kinase (217 aa).

Position 6–10 (6–10 (KLSGR)) interacts with ATP. G38 is a binding site for UMP. Residues G39 and R43 each coordinate ATP. Residues D60 and 107–113 (FQPGQST) contribute to the UMP site. The ATP site is built by N134, Y139, and D142.

It belongs to the UMP kinase family. As to quaternary structure, homohexamer.

It localises to the cytoplasm. It carries out the reaction UMP + ATP = UDP + ADP. The protein operates within pyrimidine metabolism; CTP biosynthesis via de novo pathway; UDP from UMP (UMPK route): step 1/1. Its activity is regulated as follows. Inhibited by UTP. In terms of biological role, catalyzes the reversible phosphorylation of UMP to UDP. The protein is Uridylate kinase of Pyrobaculum aerophilum (strain ATCC 51768 / DSM 7523 / JCM 9630 / CIP 104966 / NBRC 100827 / IM2).